Consider the following 210-residue polypeptide: Large ribosomal subunit protein uL3 (210 aa).

At Q151 the chain carries N5-methylglutamine.

It belongs to the universal ribosomal protein uL3 family. Part of the 50S ribosomal subunit. Forms a cluster with proteins L14 and L19. In terms of processing, methylated by PrmB.

Functionally, one of the primary rRNA binding proteins, it binds directly near the 3'-end of the 23S rRNA, where it nucleates assembly of the 50S subunit. In Aeromonas hydrophila subsp. hydrophila (strain ATCC 7966 / DSM 30187 / BCRC 13018 / CCUG 14551 / JCM 1027 / KCTC 2358 / NCIMB 9240 / NCTC 8049), this protein is Large ribosomal subunit protein uL3.